Reading from the N-terminus, the 546-residue chain is MAAKDVRFSADARDKMLRGVDILADAVKVTLGPKGRNVVIEKSFGAPRITKDGVTVAKEIELADKFENMGAQMVREVASKTNDIAGDGTTTATVLAQAIVREGAKYVAAGINPMDLKRGIDLATQAAVKDIIARAKKVSTSDEVAQVGTISANGDKEIGEMIAHAMQKVGNEGVITVEEAKTAETELDVVEGMQFDRGYLSPYFITNAEKMVAELEDPYILIHEKKLSSLQAMLPVLEAVVQTGKPLLIIAEDIEGEALATLVVNKLRGGLKVAAVKAPGFGDRRKAMLEDIAILTKGQMIAEDLGIKLENVTLPMLGRAKRVRIEKENTTIIDGVGEKSDIEGRISQIKAQIEETTSDYDREKLQERLAKLAGGVAVIRVGGATEVEVKEKKDRVDDALNATRAAVEEGIVPGGGTALLRAKKAVAELKSDIPDVQAGIKIVLKALEAPLRQIAQNAGVEGSIVVGKITDNTSSETFGFNAQTEEYVDMIQAGIVDPAKVVRTALQDAASVAGLLVTTEAMVADAPKKDSPAPAMPGGGMGGMDF.

ATP contacts are provided by residues 30 to 33 (TLGP), Lys-51, 87 to 91 (DGTTT), Gly-415, and Asp-497. A disordered region spans residues 527 to 546 (PKKDSPAPAMPGGGMGGMDF). A compositionally biased stretch (gly residues) spans 537–546 (PGGGMGGMDF).

Belongs to the chaperonin (HSP60) family. Forms a cylinder of 14 subunits composed of two heptameric rings stacked back-to-back. Interacts with the co-chaperonin GroES.

Its subcellular location is the cytoplasm. The catalysed reaction is ATP + H2O + a folded polypeptide = ADP + phosphate + an unfolded polypeptide.. Its function is as follows. Together with its co-chaperonin GroES, plays an essential role in assisting protein folding. The GroEL-GroES system forms a nano-cage that allows encapsulation of the non-native substrate proteins and provides a physical environment optimized to promote and accelerate protein folding. This chain is Chaperonin GroEL, found in Methylobacterium radiotolerans (strain ATCC 27329 / DSM 1819 / JCM 2831 / NBRC 15690 / NCIMB 10815 / 0-1).